The chain runs to 49 residues: Small, acid-soluble spore protein O (49 aa).

The disordered stretch occupies residues 1–49 (MGKRKANHTISGMNAASAQGQGAGYNEEFANENLTPAERQNNKKRKKNQ). The segment covering 8-20 (HTISGMNAASAQG) has biased composition (polar residues).

It belongs to the SspO family.

It is found in the spore core. The polypeptide is Small, acid-soluble spore protein O (Bacillus anthracis (strain A0248)).